Consider the following 369-residue polypeptide: MSETSLLPRAHGAAVLSAAMRSTPDDFQVDELPAFEPSGEGEHLLLTVRKRGQNTAYIAKKLAHWAGIAEMGVSYAGLKDRHAVTTQRFSVHLPRRIAPDIAALDDTQMQVVESSWHNRKLQRGALHGNRFVLTLRQVQGERDAIEQRLQAIAARGIPNWFGEQRFGRDGGNVAAALAMFGHVQADDGTLLPAPTSRRRLRHDQRSMLLSAARSALFNRVLGARVAQGSWDGALEGEAWMLDGSRSVFGPEPWSEALAERLARFDIHPSGPLWGAGQLRSTDQAAAVEQGALSDPPSIALRQGLEAAGLKQERRALRLRPHGLEYQWLEPQTLQLAFALPPGCYATAVLWELGDVADAGRFNVDVRADA.

Residue Asp-80 is the Nucleophile of the active site. One can recognise a TRUD domain in the interval 156–318 (GIPNWFGEQR…LKQERRALRL (163 aa)).

Belongs to the pseudouridine synthase TruD family.

It catalyses the reaction uridine(13) in tRNA = pseudouridine(13) in tRNA. Functionally, responsible for synthesis of pseudouridine from uracil-13 in transfer RNAs. This chain is tRNA pseudouridine synthase D, found in Xanthomonas axonopodis pv. citri (strain 306).